We begin with the raw amino-acid sequence, 107 residues long: Vasopressin-neurophysin 2 (107 aa).

Cysteines 1 and 6 form a disulfide. Glycine 9 carries the glycine amide modification. 7 disulfides stabilise this stretch: cysteine 22–cysteine 66, cysteine 25–cysteine 39, cysteine 33–cysteine 56, cysteine 40–cysteine 46, cysteine 73–cysteine 85, cysteine 79–cysteine 97, and cysteine 86–cysteine 91.

Belongs to the vasopressin/oxytocin family. In terms of assembly, interacts with vasopressin receptors V1bR/AVPR1B (Ki=85 pM), V1aR/AVPR1A (Ki=0.6 nM) and V2R/AVPR2 (Ki=4.9 nM). Interacts with oxytocin receptor (OXTR) (Ki=110 nM).

It localises to the secreted. Its function is as follows. Neurophysin 2 specifically binds vasopressin. Functionally, vasopressin has a direct antidiuretic action on the kidney, it also causes vasoconstriction of the peripheral vessels. Acts by binding to vasopressin receptors (V1bR/AVPR1B, V1aR/AVPR1A, and V2R/AVPR2). The polypeptide is Vasopressin-neurophysin 2 (AVP) (Balaenoptera physalus (Fin whale)).